The primary structure comprises 249 residues: ATP synthase subunit a, chloroplastic (249 aa).

5 helical membrane-spanning segments follow: residues 40-60, 97-117, 136-156, 201-221, and 222-242; these read QVLI…VIAI, VPFI…GALL, INTT…AGLS, LVVV…VMFL, and GLFT…AYIG.

The protein belongs to the ATPase A chain family. F-type ATPases have 2 components, CF(1) - the catalytic core - and CF(0) - the membrane proton channel. CF(1) has five subunits: alpha(3), beta(3), gamma(1), delta(1), epsilon(1). CF(0) has four main subunits: a, b, b' and c.

It localises to the plastid. It is found in the chloroplast thylakoid membrane. In terms of biological role, key component of the proton channel; it plays a direct role in the translocation of protons across the membrane. This is ATP synthase subunit a, chloroplastic from Barbarea verna (Land cress).